A 390-amino-acid chain; its full sequence is tRNA (guanine(9)-N1)-methyltransferase (390 aa).

The tract at residues 1–72 is disordered; it reads MDIDEESYLN…RTAQLAEGYA (72 aa). The segment covering 43-59 has biased composition (basic and acidic residues); that stretch reads ARLEEIKPLKRAAERER. One can recognise an SAM-dependent MTase TRM10-type domain in the interval 92 to 340; that stretch reads KERKEAQRRI…AVIPIRKYAP (249 aa). S-adenosyl-L-methionine contacts are provided by residues 246 to 247, G266, 270 to 274, C278, L292, and 305 to 307; these read LS, DRNRH, and KVL. Catalysis depends on D270, which acts as the Proton acceptor. Residues 343–390 are disordered; that stretch reads KTKRAKTETKRNEKEEEEVECTSAEGEEDIGVIEESAEVDPEDVFSNQ. Positions 347 to 356 are enriched in basic and acidic residues; that stretch reads AKTETKRNEK. Residues 357-390 show a composition bias toward acidic residues; sequence EEEEVECTSAEGEEDIGVIEESAEVDPEDVFSNQ.

The protein belongs to the class IV-like SAM-binding methyltransferase superfamily. TRM10 family. In terms of assembly, monomer.

It is found in the cytoplasm. The protein localises to the nucleus. The enzyme catalyses guanosine(9) in tRNA + S-adenosyl-L-methionine = N(1)-methylguanosine(9) in tRNA + S-adenosyl-L-homocysteine + H(+). Its function is as follows. S-adenosyl-L-methionine-dependent guanine N(1)-methyltransferase that catalyzes the formation of N(1)-methylguanine at position 9 (m1G9) in cytoplasmic tRNA. The sequence is that of tRNA (guanine(9)-N1)-methyltransferase from Cryptococcus neoformans var. neoformans serotype D (strain JEC21 / ATCC MYA-565) (Filobasidiella neoformans).